Here is an 817-residue protein sequence, read N- to C-terminus: DNA ligase (817 aa).

Residues 45–49 (DVEYD), 94–95 (SI), and glutamate 131 contribute to the NAD(+) site. Catalysis depends on lysine 133, which acts as the N6-AMP-lysine intermediate. NAD(+)-binding residues include arginine 154, glutamate 193, lysine 311, and lysine 335. Zn(2+) contacts are provided by cysteine 444, cysteine 447, cysteine 462, and cysteine 468. Residues 733 to 817 (AEEGVLDGKT…LLKKPAGDQA (85 aa)) enclose the BRCT domain.

The protein belongs to the NAD-dependent DNA ligase family. LigA subfamily. It depends on Mg(2+) as a cofactor. Mn(2+) serves as cofactor.

It carries out the reaction NAD(+) + (deoxyribonucleotide)n-3'-hydroxyl + 5'-phospho-(deoxyribonucleotide)m = (deoxyribonucleotide)n+m + AMP + beta-nicotinamide D-nucleotide.. Its function is as follows. DNA ligase that catalyzes the formation of phosphodiester linkages between 5'-phosphoryl and 3'-hydroxyl groups in double-stranded DNA using NAD as a coenzyme and as the energy source for the reaction. It is essential for DNA replication and repair of damaged DNA. This chain is DNA ligase, found in Ralstonia pickettii (strain 12J).